Consider the following 382-residue polypeptide: Lipid-A-disaccharide synthase (382 aa).

Belongs to the LpxB family.

It catalyses the reaction 2-N,3-O-bis[(3R)-3-hydroxytetradecanoyl]-alpha-D-glucosaminyl 1-phosphate + UDP-2-N,3-O-bis[(3R)-3-hydroxytetradecanoyl]-alpha-D-glucosamine = lipid A disaccharide (E. coli) + UDP + H(+). The enzyme catalyses a lipid X + a UDP-2-N,3-O-bis[(3R)-3-hydroxyacyl]-alpha-D-glucosamine = a lipid A disaccharide + UDP + H(+). It participates in glycolipid biosynthesis; lipid IV(A) biosynthesis; lipid IV(A) from (3R)-3-hydroxytetradecanoyl-[acyl-carrier-protein] and UDP-N-acetyl-alpha-D-glucosamine: step 5/6. In terms of biological role, condensation of UDP-2,3-diacylglucosamine and 2,3-diacylglucosamine-1-phosphate to form lipid A disaccharide, a precursor of lipid A, a phosphorylated glycolipid that anchors the lipopolysaccharide to the outer membrane of the cell. This Escherichia coli (strain 55989 / EAEC) protein is Lipid-A-disaccharide synthase.